The chain runs to 218 residues: Ribose-5-phosphate isomerase A (218 aa).

Residues 28–31, 81–84, and 94–97 contribute to the substrate site; these read SGST, DGAD, and KGGG. Glu103 functions as the Proton acceptor in the catalytic mechanism. Lys121 provides a ligand contact to substrate.

Belongs to the ribose 5-phosphate isomerase family. As to quaternary structure, homodimer.

It catalyses the reaction aldehydo-D-ribose 5-phosphate = D-ribulose 5-phosphate. The protein operates within carbohydrate degradation; pentose phosphate pathway; D-ribose 5-phosphate from D-ribulose 5-phosphate (non-oxidative stage): step 1/1. Catalyzes the reversible conversion of ribose-5-phosphate to ribulose 5-phosphate. The polypeptide is Ribose-5-phosphate isomerase A (Dichelobacter nodosus (strain VCS1703A)).